Consider the following 165-residue polypeptide: Large ribosomal subunit protein uL10 (165 aa).

This sequence belongs to the universal ribosomal protein uL10 family. As to quaternary structure, part of the ribosomal stalk of the 50S ribosomal subunit. The N-terminus interacts with L11 and the large rRNA to form the base of the stalk. The C-terminus forms an elongated spine to which L12 dimers bind in a sequential fashion forming a multimeric L10(L12)X complex.

Forms part of the ribosomal stalk, playing a central role in the interaction of the ribosome with GTP-bound translation factors. The protein is Large ribosomal subunit protein uL10 (rplJ) of Halalkalibacterium halodurans (strain ATCC BAA-125 / DSM 18197 / FERM 7344 / JCM 9153 / C-125) (Bacillus halodurans).